We begin with the raw amino-acid sequence, 812 residues long: Lon protease (812 aa).

The region spanning 22 to 215 is the Lon N-terminal domain; the sequence is YAVLPLRDIV…KALSFMEAEI (194 aa). ATP is bound at residue 367 to 374; that stretch reads GPPGVGKT. In terms of domain architecture, Lon proteolytic spans 602-783; that stretch reads EDQVGVVTGL…GEVLKHALVR (182 aa). Residues serine 689 and lysine 732 contribute to the active site. Positions 787-812 are disordered; that stretch reads PIEWTEQENPTAVPPVEDEAGASLAH.

It belongs to the peptidase S16 family. As to quaternary structure, homohexamer. Organized in a ring with a central cavity.

It localises to the cytoplasm. It catalyses the reaction Hydrolysis of proteins in presence of ATP.. Its function is as follows. ATP-dependent serine protease that mediates the selective degradation of mutant and abnormal proteins as well as certain short-lived regulatory proteins. Required for cellular homeostasis and for survival from DNA damage and developmental changes induced by stress. Degrades polypeptides processively to yield small peptide fragments that are 5 to 10 amino acids long. Binds to DNA in a double-stranded, site-specific manner. The polypeptide is Lon protease (Brucella melitensis biotype 1 (strain ATCC 23456 / CCUG 17765 / NCTC 10094 / 16M)).